Reading from the N-terminus, the 930-residue chain is Translation initiation factor IF-2 (930 aa).

Over residues 50-67 the composition is skewed to low complexity; the sequence is FKPAAAPKVEAKPAAPKV. 2 disordered regions span residues 50–217 and 260–346; these read FKPA…SSEE and EVVP…HELP. Composition is skewed to basic and acidic residues over residues 68–90 and 110–125; these read SAEKKAEKSEPAKPAVAKEEAKP and FKAEREARAKEQAERR. A compositionally biased stretch (low complexity) spans 129 to 141; the sequence is KGNNRDQQQNGNR. 2 stretches are compositionally biased toward basic and acidic residues: residues 157 to 167 and 262 to 295; these read RDNRRFNDQAK and VPEKKEPAVDTRRKKQARPDKNRDDYDHEEDGPR. Over residues 309 to 318 the composition is skewed to low complexity; the sequence is NQKNSNWNNN. Residues 337–346 show a composition bias toward basic and acidic residues; that stretch reads VTERKFHELP. A tr-type G domain is found at 432-599; it reads ERPPVVTIMG…TVLLVAEIQE (168 aa). The segment at 441–448 is G1; the sequence is GHVDHGKT. A GTP-binding site is contributed by 441–448; sequence GHVDHGKT. Residues 466–470 are G2; sequence GITQH. The G3 stretch occupies residues 487–490; the sequence is DTPG. Residues 487-491 and 541-544 each bind GTP; these read DTPGH and NKID. The segment at 541–544 is G4; the sequence is NKID. The tract at residues 577 to 579 is G5; the sequence is SAK.

The protein belongs to the TRAFAC class translation factor GTPase superfamily. Classic translation factor GTPase family. IF-2 subfamily.

The protein resides in the cytoplasm. Functionally, one of the essential components for the initiation of protein synthesis. Protects formylmethionyl-tRNA from spontaneous hydrolysis and promotes its binding to the 30S ribosomal subunits. Also involved in the hydrolysis of GTP during the formation of the 70S ribosomal complex. The chain is Translation initiation factor IF-2 from Streptococcus pneumoniae (strain CGSP14).